The following is a 319-amino-acid chain: MNYTPYSSPAPGLTISPTMDPVTWVYFSVTFLAMATCVCGIVGNSMVIWLLSFHRVQRSPFCTYVLNLAVADLLFLLCMASLLSLETGPLLTASTSARVYEGMKRIKYFAYTAGLSLLTAISTQRCLSVLFPIWYKCHRPQHLSGVVCGVLWALALLMNFLASFFCVQFWHPDKYQCFKVDMVFNSLILGIFMPVMVLTSAIIFIRMRKNSLLQRRQPRRLYVVILTSVLVFLTCSLPLGINWFLLYWVELPQAVRLLYVCSSRFSSSLSSSANPVIYFLVGSQKSHRLQESLGAVLGRALQDEPEGRETPSTCTNDGV.

Over 1–30 (MNYTPYSSPAPGLTISPTMDPVTWVYFSVT) the chain is Extracellular. The helical transmembrane segment at 31–51 (FLAMATCVCGIVGNSMVIWLL) threads the bilayer. Residues 52–64 (SFHRVQRSPFCTY) are Cytoplasmic-facing. The helical transmembrane segment at 65–85 (VLNLAVADLLFLLCMASLLSL) threads the bilayer. The Extracellular segment spans residues 86-92 (ETGPLLT). A helical membrane pass occupies residues 93–113 (ASTSARVYEGMKRIKYFAYTA). Topologically, residues 114 to 144 (GLSLLTAISTQRCLSVLFPIWYKCHRPQHLS) are cytoplasmic. The helical transmembrane segment at 145-165 (GVVCGVLWALALLMNFLASFF) threads the bilayer. Over 166-184 (CVQFWHPDKYQCFKVDMVF) the chain is Extracellular. Residues 185–205 (NSLILGIFMPVMVLTSAIIFI) form a helical membrane-spanning segment. The Cytoplasmic portion of the chain corresponds to 206–220 (RMRKNSLLQRRQPRR). Residues 221-241 (LYVVILTSVLVFLTCSLPLGI) traverse the membrane as a helical segment. Residues 242–260 (NWFLLYWVELPQAVRLLYV) are Extracellular-facing. A helical membrane pass occupies residues 261–281 (CSSRFSSSLSSSANPVIYFLV). Residues 282 to 319 (GSQKSHRLQESLGAVLGRALQDEPEGRETPSTCTNDGV) are Cytoplasmic-facing.

The protein belongs to the G-protein coupled receptor 1 family. Mas subfamily. In terms of tissue distribution, co-expressed in the small diameter neurons with P2X3 and VR1 in dorsal root ganglia.

It is found in the cell membrane. In terms of biological role, may regulate nociceptor function and/or development, including the sensation or modulation of pain. Functions as a specific membrane receptor for beta-alanine. The receptor couples with G-protein G(q) and G(i). The polypeptide is Mas-related G-protein coupled receptor member D (Mrgprd) (Rattus norvegicus (Rat)).